The primary structure comprises 636 residues: Chaperone protein HtpG (636 aa).

Residues 1-344 (MTMSVETQKE…SNDLSLNVSR (344 aa)) are a; substrate-binding. The tract at residues 345–561 (EILQKDPIID…EQDLGMQMRQ (217 aa)) is b. The segment at 562 to 636 (ILEASGQKVP…LNKLLVELSV (75 aa)) is c.

The protein belongs to the heat shock protein 90 family. Homodimer.

Its subcellular location is the cytoplasm. Molecular chaperone. Has ATPase activity. The polypeptide is Chaperone protein HtpG (Pseudomonas fluorescens (strain SBW25)).